The sequence spans 337 residues: D-alanine--D-alanine ligase (337 aa).

An ATP-grasp domain is found at 126-326 (KQIWISNGLS…YADLVLWLLS (201 aa)). 152–207 (VKHLGLPLIVKPAHEGSSLGLTKVKSVEELPAAYQLAAGLDKKVIAETCIVGDELT) is an ATP binding site. Mg(2+) is bound by residues D279, E293, and N295.

Belongs to the D-alanine--D-alanine ligase family. It depends on Mg(2+) as a cofactor. Requires Mn(2+) as cofactor.

The protein localises to the cytoplasm. The enzyme catalyses 2 D-alanine + ATP = D-alanyl-D-alanine + ADP + phosphate + H(+). It functions in the pathway cell wall biogenesis; peptidoglycan biosynthesis. Its function is as follows. Cell wall formation. The sequence is that of D-alanine--D-alanine ligase from Polynucleobacter asymbioticus (strain DSM 18221 / CIP 109841 / QLW-P1DMWA-1) (Polynucleobacter necessarius subsp. asymbioticus).